The chain runs to 204 residues: Large ribosomal subunit protein mL67 (204 aa).

It belongs to the mitochondrion-specific ribosomal protein mL67 family.

The protein resides in the nucleus. It localises to the mitochondrion. In terms of biological role, transcription factor involved in regulation of RNA polymerase II-dependent transcription. Also involved in regulation of mitochondrial DNA recombination, maintenance and repair, and generation of homoplasmic cells. This is Large ribosomal subunit protein mL67 (MHR1) from Yarrowia lipolytica (strain CLIB 122 / E 150) (Yeast).